Consider the following 440-residue polypeptide: Tuliposide B-converting enzyme 1, amyloplastic (440 aa).

The transit peptide at Met-1 to Pro-58 directs the protein to the amyloplast. Ser-232 serves as the catalytic Acyl-ester intermediate. Residues Asp-325 and His-357 each act as charge relay system in the active site.

It belongs to the AB hydrolase superfamily. As to quaternary structure, homodimer. In terms of processing, not glycosylated. As to expression, expressed in the pollen grains.

It is found in the plastid. The protein localises to the amyloplast. The catalysed reaction is 6-tuliposide B = tulipalin B + D-glucose. With respect to regulation, inhibited by Ag(+), Cu(2+), Fe(2+), Hg(2+), V(3+) and phenylmethylsulfonyl fluoride (PMSF). Lactone-forming carboxylesterase, specifically catalyzing intramolecular transesterification, but not hydrolysis. Involved in the biosynthesis of tulipalins, defensive chemicals that show antimicrobial activities against a broad range of strains of bacteria and fungi. Substrates are 6-tuliposide B &gt; 6-tuliposide A. The protein is Tuliposide B-converting enzyme 1, amyloplastic of Tulipa gesneriana (Garden tulip).